The chain runs to 535 residues: Peptide chain release factor 3 (535 aa).

Residues 8–277 (KRRRTFAIIS…TLVELAPPPG (270 aa)) enclose the tr-type G domain. Residues 17–24 (SHPDAGKT), 85–89 (DTPGH), and 139–142 (NKLD) each bind GTP.

This sequence belongs to the TRAFAC class translation factor GTPase superfamily. Classic translation factor GTPase family. PrfC subfamily.

Its subcellular location is the cytoplasm. Increases the formation of ribosomal termination complexes and stimulates activities of RF-1 and RF-2. It binds guanine nucleotides and has strong preference for UGA stop codons. It may interact directly with the ribosome. The stimulation of RF-1 and RF-2 is significantly reduced by GTP and GDP, but not by GMP. The sequence is that of Peptide chain release factor 3 from Nitrosomonas europaea (strain ATCC 19718 / CIP 103999 / KCTC 2705 / NBRC 14298).